The following is a 109-amino-acid chain: Resistin (109 aa).

The first 18 residues, 1-18, serve as a signal peptide directing secretion; that stretch reads MKALSFLFIPVLGLLVCG. 5 disulfides stabilise this stretch: C51-C104, C63-C103, C72-C89, C74-C91, and C78-C93.

Belongs to the resistin/FIZZ family. As to quaternary structure, homodimer; disulfide-linked.

Its subcellular location is the secreted. Hormone that seems to suppress insulin ability to stimulate glucose uptake into adipose cells. Potentially links obesity to diabetes. This Bos taurus (Bovine) protein is Resistin (RETN).